The primary structure comprises 426 residues: 3-phosphoshikimate 1-carboxyvinyltransferase (426 aa).

3-phosphoshikimate-binding residues include Lys22, Ser23, and Arg27. Residue Lys22 coordinates phosphoenolpyruvate. Phosphoenolpyruvate contacts are provided by Gly96 and Arg124. 3-phosphoshikimate is bound by residues Ser170, Ser171, Gln172, Ser198, Asp314, Asn337, and Lys341. Gln172 serves as a coordination point for phosphoenolpyruvate. Asp314 (proton acceptor) is an active-site residue. The phosphoenolpyruvate site is built by Arg345, Arg387, and Lys412.

It belongs to the EPSP synthase family. As to quaternary structure, monomer.

It is found in the cytoplasm. It catalyses the reaction 3-phosphoshikimate + phosphoenolpyruvate = 5-O-(1-carboxyvinyl)-3-phosphoshikimate + phosphate. It functions in the pathway metabolic intermediate biosynthesis; chorismate biosynthesis; chorismate from D-erythrose 4-phosphate and phosphoenolpyruvate: step 6/7. In terms of biological role, catalyzes the transfer of the enolpyruvyl moiety of phosphoenolpyruvate (PEP) to the 5-hydroxyl of shikimate-3-phosphate (S3P) to produce enolpyruvyl shikimate-3-phosphate and inorganic phosphate. In Shewanella sp. (strain MR-7), this protein is 3-phosphoshikimate 1-carboxyvinyltransferase.